The sequence spans 748 residues: SNF-related serine/threonine-protein kinase (748 aa).

Residues tyrosine 16–leucine 269 form the Protein kinase domain. ATP contacts are provided by residues leucine 22–valine 30 and lysine 45. Aspartate 139 (proton acceptor) is an active-site residue. Phosphoserine is present on serine 162. Residue threonine 173 is modified to Phosphothreonine; by LKB1. The 44-residue stretch at serine 291–glutamate 334 folds into the UBA domain. Serine 362, serine 390, serine 482, serine 495, and serine 518 each carry phosphoserine. The interval serine 383–glutamate 415 is disordered. Residues glutamate 491–glutamate 503 show a composition bias toward acidic residues. Residues glutamate 491–alanine 640 are disordered. Basic residues predominate over residues valine 522–glutamine 532. Low complexity predominate over residues glycine 533–glutamate 542. The residue at position 534 (arginine 534) is an Omega-N-methylarginine. Basic and acidic residues predominate over residues glutamate 549–serine 558. 2 stretches are compositionally biased toward gly residues: residues glycine 575–valine 592 and glutamine 600–proline 614. The residue at position 606 (serine 606) is a Phosphoserine. Residues serine 629–alanine 640 are compositionally biased toward low complexity.

This sequence belongs to the protein kinase superfamily. CAMK Ser/Thr protein kinase family. Mg(2+) serves as cofactor. Post-translationally, autophosphorylated. Phosphorylation on Thr-173 by STK11/LKB1 in complex with STE20-related adapter-alpha (STRADA) pseudo kinase and CAB39. Ubiquitously expressed in all tissues examined.

It is found in the nucleus. The enzyme catalyses L-seryl-[protein] + ATP = O-phospho-L-seryl-[protein] + ADP + H(+). It carries out the reaction L-threonyl-[protein] + ATP = O-phospho-L-threonyl-[protein] + ADP + H(+). Its activity is regulated as follows. Activated by phosphorylation on Thr-173. Its function is as follows. May play a role in hematopoietic cell proliferation or differentiation. Potential mediator of neuronal apoptosis. The chain is SNF-related serine/threonine-protein kinase from Mus musculus (Mouse).